A 585-amino-acid polypeptide reads, in one-letter code: Glycerol-3-phosphate acyltransferase 1 (585 aa).

3 consecutive transmembrane segments (helical) span residues 126 to 146 (FFPY…AILL), 334 to 354 (TPLA…LAVF), and 356 to 376 (ISVG…MSGV). The HXXXXD motif motif lies at 403–408 (HRTLLD).

This sequence belongs to the GPAT/DAPAT family. Highly expressed in developing siliques and flower buds. Weakly or not expressed in roots, seedlings and leaves.

It localises to the membrane. The protein resides in the mitochondrion. The enzyme catalyses sn-glycerol 3-phosphate + an acyl-CoA = a 1-acyl-sn-glycero-3-phosphate + CoA. The protein operates within phospholipid metabolism; CDP-diacylglycerol biosynthesis; CDP-diacylglycerol from sn-glycerol 3-phosphate: step 1/3. In terms of biological role, esterifies acyl-group from acyl-ACP to the sn-1 position of glycerol-3-phosphate, an essential step in glycerolipid biosynthesis. Involved in pollen development, by being required for tapetum differentiation and male fertility. In addition to the sporophytic effect, it also exerts a gametophytic effect on pollen performance. The protein is Glycerol-3-phosphate acyltransferase 1 (GPAT1) of Arabidopsis thaliana (Mouse-ear cress).